The following is a 303-amino-acid chain: Ribosomal large subunit pseudouridine synthase C (303 aa).

Residues 11 to 70 (FRLDKYLKRLYPSLTQGVIEKALRQKQVTVNFQKAEANLRVKEGDTIFINDYFNLPVTQH) enclose the S4 RNA-binding domain. D140 is a catalytic residue.

Belongs to the pseudouridine synthase RluA family.

The enzyme catalyses uridine(955/2504/2580) in 23S rRNA = pseudouridine(955/2504/2580) in 23S rRNA. Its function is as follows. Responsible for synthesis of pseudouridine from uracil at positions 955, 2504 and 2580 in 23S ribosomal RNA. The polypeptide is Ribosomal large subunit pseudouridine synthase C (rluC) (Rickettsia typhi (strain ATCC VR-144 / Wilmington)).